The primary structure comprises 302 residues: Glycine--tRNA ligase alpha subunit (302 aa).

The protein belongs to the class-II aminoacyl-tRNA synthetase family. As to quaternary structure, tetramer of two alpha and two beta subunits.

It localises to the cytoplasm. The catalysed reaction is tRNA(Gly) + glycine + ATP = glycyl-tRNA(Gly) + AMP + diphosphate. The sequence is that of Glycine--tRNA ligase alpha subunit from Xanthomonas oryzae pv. oryzae (strain PXO99A).